Here is a 356-residue protein sequence, read N- to C-terminus: Tyrosine recombinase XerS (356 aa).

In terms of domain architecture, Core-binding (CB) spans 16–121 (LMPWFVLEYY…ALSSLYKYLT (106 aa)). A Tyr recombinase domain is found at 169-354 (KFLDYVENEY…VNDEQKNALD (186 aa)). Residues Arg210, Lys234, His306, Arg309, and His332 contribute to the active site. Tyr341 serves as the catalytic O-(3'-phospho-DNA)-tyrosine intermediate.

This sequence belongs to the 'phage' integrase family. XerS subfamily.

Its subcellular location is the cytoplasm. Its activity is regulated as follows. FtsK is required for recombination. Its function is as follows. Site-specific tyrosine recombinase, which acts by catalyzing the cutting and rejoining of the recombining DNA molecules. Essential to convert dimers of the bacterial chromosome into monomers to permit their segregation at cell division. The chain is Tyrosine recombinase XerS from Streptococcus thermophilus (strain ATCC BAA-491 / LMD-9).